Here is a 170-residue protein sequence, read N- to C-terminus: Non-specific lipid transfer protein GPI-anchored 5 (170 aa).

The first 24 residues, 1-24 (MKMEMGLVFLTVFMAVMSSTMVSA), serve as a signal peptide directing secretion. 4 cysteine pairs are disulfide-bonded: Cys28-Cys69, Cys38-Cys53, Cys54-Cys95, and Cys67-Cys105. 4 N-linked (GlcNAc...) asparagine glycosylation sites follow: Asn45, Asn84, Asn124, and Asn130. The interval 105-148 (CNTGGGGGGSTSDSPAESPNSSGPGNGSKTVPVGEGDGPPSSDG) is disordered. A lipid anchor (GPI-anchor amidated serine) is attached at Ser146. Residues 147 to 170 (DGSSIKFSFPLIAFFSAVSYMAIF) constitute a propeptide, removed in mature form.

This sequence belongs to the plant LTP family. Expressed in seedlings, preferentially in the endodermis of hypocotyls and roots, as well as in anthers, sepals and flower tori.

It localises to the cell membrane. Functionally, lipid transfer protein involved in seed and ovule maturation and development, probably by regulating the fatty acids homeostasis during suberin and sporopollenin biosynthesis or deposition. Contributes to pre-invasive defense against some non-host powdery mildew pathogens by preventing the penetration of the epidermal cell wall by the fungal agents (e.g. Blumeria graminis f. sp. hordei (Bgh)). This chain is Non-specific lipid transfer protein GPI-anchored 5, found in Arabidopsis thaliana (Mouse-ear cress).